The following is a 139-amino-acid chain: Ribulose bisphosphate carboxylase small subunit (139 aa).

Belongs to the RuBisCO small chain family. As to quaternary structure, heterohexadecamer of 8 large and 8 small subunits.

It is found in the plastid. The protein localises to the chloroplast. In terms of biological role, ruBisCO catalyzes two reactions: the carboxylation of D-ribulose 1,5-bisphosphate, the primary event in carbon dioxide fixation, as well as the oxidative fragmentation of the pentose substrate in the photorespiration process. Both reactions occur simultaneously and in competition at the same active site. Although the small subunit is not catalytic it is essential for maximal activity. The polypeptide is Ribulose bisphosphate carboxylase small subunit (Cylindrotheca sp. (strain N1) (Marine diatom)).